A 123-amino-acid chain; its full sequence is Prismalin-14 (123 aa).

An N-terminal signal peptide occupies residues 1–16; that stretch reads MRSLLVLLALAACASA.

In terms of tissue distribution, prismatic layer of shell (at protein level). Expressed primarily in the mantle with highest level in the mantle edge and lower level in the mantle pallium.

The protein resides in the secreted. Functionally, may be involved in calcification of the prismatic layer of the shell. This Margaritifera margaritifera (Freshwater pearl mussel) protein is Prismalin-14.